We begin with the raw amino-acid sequence, 572 residues long: Urease subunit alpha (572 aa).

Ni(2+) contacts are provided by H139, H141, and K222. An N6-carboxylysine modification is found at K222. H224 is a substrate binding site. Ni(2+) is bound by residues H251 and H277. The active-site Proton donor is the H325. D365 contacts Ni(2+).

It belongs to the metallo-dependent hydrolases superfamily. Urease alpha subunit family. As to quaternary structure, heterotrimer of UreA (gamma), UreB (beta) and UreC (alpha) subunits. Three heterotrimers associate to form the active enzyme. Ni cation is required as a cofactor. In terms of processing, carboxylation allows a single lysine to coordinate two nickel ions.

The protein localises to the cytoplasm. The enzyme catalyses urea + 2 H2O + H(+) = hydrogencarbonate + 2 NH4(+). It participates in nitrogen metabolism; urea degradation; CO(2) and NH(3) from urea (urease route): step 1/1. The sequence is that of Urease subunit alpha from Acetivibrio thermocellus (strain ATCC 27405 / DSM 1237 / JCM 9322 / NBRC 103400 / NCIMB 10682 / NRRL B-4536 / VPI 7372) (Clostridium thermocellum).